We begin with the raw amino-acid sequence, 1488 residues long: Chromosome partition protein MukB (1488 aa).

34 to 41 (GGNGAGKS) serves as a coordination point for ATP. Coiled coils occupy residues 326–418 (LEAD…QYNQ), 444–472 (LDTFQAKEQEATEKLLSLEQKMSVAQTAH), and 509–602 (RHLA…QRAP). Positions 666–783 (PGGAEDQRLN…SLPIFGRAAR (118 aa)) are flexible hinge. 3 coiled-coil regions span residues 835–923 (EAEI…AKLE), 977–1116 (EMLS…AKAG), and 1209–1265 (VEAI…LQSV). The tract at residues 1049–1074 (ADSGAEERARQRRDELHAQLSNNRSR) is disordered. Basic and acidic residues predominate over residues 1051-1065 (SGAEERARQRRDELH).

This sequence belongs to the SMC family. MukB subfamily. In terms of assembly, homodimerization via its hinge domain. Binds to DNA via its C-terminal region. Interacts, and probably forms a ternary complex, with MukE and MukF via its C-terminal region. The complex formation is stimulated by calcium or magnesium. Interacts with tubulin-related protein FtsZ.

It localises to the cytoplasm. The protein localises to the nucleoid. Its function is as follows. Plays a central role in chromosome condensation, segregation and cell cycle progression. Functions as a homodimer, which is essential for chromosome partition. Involved in negative DNA supercoiling in vivo, and by this means organize and compact chromosomes. May achieve or facilitate chromosome segregation by condensation DNA from both sides of a centrally located replisome during cell division. In Salmonella paratyphi A (strain ATCC 9150 / SARB42), this protein is Chromosome partition protein MukB.